The primary structure comprises 192 residues: UPF0312 protein PFLU_5725 (192 aa).

Positions 1–23 are cleaved as a signal peptide; that stretch reads MLKKTLAALAIGTALLSAGQVMA.

This sequence belongs to the UPF0312 family. Type 1 subfamily.

The protein resides in the periplasm. The chain is UPF0312 protein PFLU_5725 from Pseudomonas fluorescens (strain SBW25).